The primary structure comprises 314 residues: Ferrochelatase (314 aa).

Positions 188 and 269 each coordinate Fe cation.

This sequence belongs to the ferrochelatase family.

The protein resides in the cytoplasm. It carries out the reaction heme b + 2 H(+) = protoporphyrin IX + Fe(2+). Its pathway is porphyrin-containing compound metabolism; protoheme biosynthesis; protoheme from protoporphyrin-IX: step 1/1. In terms of biological role, catalyzes the ferrous insertion into protoporphyrin IX. The chain is Ferrochelatase from Campylobacter fetus subsp. fetus (strain 82-40).